The following is a 185-amino-acid chain: Hypoxanthine/guanine phosphoribosyltransferase (185 aa).

The protein belongs to the purine/pyrimidine phosphoribosyltransferase family. Archaeal HPRT subfamily. In terms of assembly, homodimer.

The protein resides in the cytoplasm. The catalysed reaction is IMP + diphosphate = hypoxanthine + 5-phospho-alpha-D-ribose 1-diphosphate. It carries out the reaction GMP + diphosphate = guanine + 5-phospho-alpha-D-ribose 1-diphosphate. Its pathway is purine metabolism; IMP biosynthesis via salvage pathway; IMP from hypoxanthine: step 1/1. Catalyzes a salvage reaction resulting in the formation of IMP that is energically less costly than de novo synthesis. This chain is Hypoxanthine/guanine phosphoribosyltransferase, found in Aciduliprofundum boonei (strain DSM 19572 / T469).